A 378-amino-acid polypeptide reads, in one-letter code: Transaldolase 1 (378 aa).

Residue lysine 146 is the Schiff-base intermediate with substrate of the active site.

Belongs to the transaldolase family. Type 2 subfamily.

It localises to the cytoplasm. It carries out the reaction D-sedoheptulose 7-phosphate + D-glyceraldehyde 3-phosphate = D-erythrose 4-phosphate + beta-D-fructose 6-phosphate. It functions in the pathway carbohydrate degradation; pentose phosphate pathway; D-glyceraldehyde 3-phosphate and beta-D-fructose 6-phosphate from D-ribose 5-phosphate and D-xylulose 5-phosphate (non-oxidative stage): step 2/3. In terms of biological role, transaldolase is important for the balance of metabolites in the pentose-phosphate pathway. This chain is Transaldolase 1, found in Streptomyces avermitilis (strain ATCC 31267 / DSM 46492 / JCM 5070 / NBRC 14893 / NCIMB 12804 / NRRL 8165 / MA-4680).